Reading from the N-terminus, the 279-residue chain is Thiazole synthase (279 aa).

The Schiff-base intermediate with DXP role is filled by K116. 1-deoxy-D-xylulose 5-phosphate is bound by residues G177, 203-204 (AG), and 225-226 (NS).

Belongs to the ThiG family. As to quaternary structure, homotetramer. Forms heterodimers with either ThiH or ThiS.

The protein resides in the cytoplasm. The enzyme catalyses [ThiS sulfur-carrier protein]-C-terminal-Gly-aminoethanethioate + 2-iminoacetate + 1-deoxy-D-xylulose 5-phosphate = [ThiS sulfur-carrier protein]-C-terminal Gly-Gly + 2-[(2R,5Z)-2-carboxy-4-methylthiazol-5(2H)-ylidene]ethyl phosphate + 2 H2O + H(+). The protein operates within cofactor biosynthesis; thiamine diphosphate biosynthesis. In terms of biological role, catalyzes the rearrangement of 1-deoxy-D-xylulose 5-phosphate (DXP) to produce the thiazole phosphate moiety of thiamine. Sulfur is provided by the thiocarboxylate moiety of the carrier protein ThiS. In vitro, sulfur can be provided by H(2)S. The polypeptide is Thiazole synthase (Trichodesmium erythraeum (strain IMS101)).